A 465-amino-acid polypeptide reads, in one-letter code: WAS protein family homolog 2 (465 aa).

The interval 1–54 (MTPVRMQHSLAGQTYAVPLIQPDLRREEAVQQMADALQYLQKVSGDIFSRISQQ) is required for WASH complex assembly. A WHD1 region spans residues 1–167 (MTPVRMQHSL…EGLGGLPSNI (167 aa)). Lys220 is covalently cross-linked (Glycyl lysine isopeptide (Lys-Gly) (interchain with G-Cter in ubiquitin)). Disordered stretches follow at residues 297-407 (QDGV…QGGH) and 422-465 (GISG…DWES). Residues 302–314 (TPPPPPPPPPPAP) show a composition bias toward pro residues. The segment at 349 to 465 (QGAPREVVDP…AEEDEDDWES (117 aa)) is VCA. The WH2 domain maps to 361–383 (GRATLLESIRQAGGIGKAKLRSM). Over residues 382–398 (SMKERKLEKKKQKEQEQ) the composition is skewed to basic and acidic residues. A compositionally biased stretch (gly residues) spans 424–436 (SGKGPGAGEGPGG). Residues 456–465 (AEEDEDDWES) are compositionally biased toward acidic residues.

It belongs to the WASH1 family. As to quaternary structure, component of the WASH core complex also described as WASH regulatory complex (SHRC) composed of WASH (WASHC1, WASH2P or WASH3P), WASHC2 (WASHC2A or WASHC2C), WASHC3, WASHC4 and WASHC5. The WASH core complex associates with the F-actin-capping protein dimer (formed by CAPZA1, CAPZA2 or CAPZA3 and CAPZB) in a transient or substoichiometric manner which was initially described as WASH complex. Interacts (via WHD1 region) with WASHC2C; the interaction is direct. Interacts with alpha-tubulin. Interacts with BECN1; WASHC1 and AMBRA1 can competitively interact with BECN1. Interacts with BLOC1S2; may associate with the BLOC-1 complex. Interacts with tubulin gamma chain (TUBG1 or TUBG2). Interacts with EXOC1, EXOC4, EXOC8; in MMP14-positive endosomes in breast tumor cells; indicative for an association with the exocyst complex.

Its subcellular location is the early endosome membrane. The protein resides in the recycling endosome membrane. The protein localises to the late endosome. It localises to the cytoplasmic vesicle. It is found in the autophagosome. Its subcellular location is the cytoplasm. The protein resides in the cytoskeleton. The protein localises to the microtubule organizing center. It localises to the centrosome. It is found in the centriole. Acts as a nucleation-promoting factor at the surface of endosomes, where it recruits and activates the Arp2/3 complex to induce actin polymerization, playing a key role in the fission of tubules that serve as transport intermediates during endosome sorting. Involved in endocytic trafficking of EGF. Involved in transferrin receptor recycling. Regulates the trafficking of endosomal alpha5beta1 integrin to the plasma membrane and involved in invasive cell migration. In T-cells involved in endosome-to-membrane recycling of receptors including T-cell receptor (TCR), CD28 and ITGAL; proposed to be implicated in T-cell proliferation and effector function. In dendritic cells involved in endosome-to-membrane recycling of major histocompatibility complex (MHC) class II probably involving retromer and subsequently allowing antigen sampling, loading and presentation during T-cell activation. Involved in Arp2/3 complex-dependent actin assembly driving Salmonella typhimurium invasion independent of ruffling. Involved in the exocytosis of MMP14 leading to matrix remodeling during invasive migration and implicating late endosome-to-plasma membrane tubular connections and cooperation with the exocyst complex. Involved in negative regulation of autophagy independently from its role in endosomal sorting by inhibiting BECN1 ubiquitination to inactivate PIK3C3/Vps34 activity. This chain is WAS protein family homolog 2 (WASH2P), found in Homo sapiens (Human).